We begin with the raw amino-acid sequence, 205 residues long: Pyrrolidone-carboxylate peptidase (205 aa).

Residues Glu79, Cys142, and His165 contribute to the active site.

Belongs to the peptidase C15 family. Homotetramer.

It localises to the cytoplasm. The catalysed reaction is Release of an N-terminal pyroglutamyl group from a polypeptide, the second amino acid generally not being Pro.. Removes 5-oxoproline from various penultimate amino acid residues except L-proline. This chain is Pyrrolidone-carboxylate peptidase, found in Gloeobacter violaceus (strain ATCC 29082 / PCC 7421).